A 509-amino-acid chain; its full sequence is Maturase K (509 aa).

It belongs to the intron maturase 2 family. MatK subfamily.

Its subcellular location is the plastid. It is found in the chloroplast. Functionally, usually encoded in the trnK tRNA gene intron. Probably assists in splicing its own and other chloroplast group II introns. In Cicer arietinum (Chickpea), this protein is Maturase K.